A 316-amino-acid chain; its full sequence is Aspartate carbamoyltransferase catalytic subunit (316 aa).

The carbamoyl phosphate site is built by Arg-66 and Thr-67. Residue Lys-94 participates in L-aspartate binding. The carbamoyl phosphate site is built by Arg-116, His-146, and Gln-149. Residues Arg-179 and Arg-234 each coordinate L-aspartate. Carbamoyl phosphate contacts are provided by Gly-275 and Pro-276.

This sequence belongs to the aspartate/ornithine carbamoyltransferase superfamily. ATCase family. In terms of assembly, heterododecamer (2C3:3R2) of six catalytic PyrB chains organized as two trimers (C3), and six regulatory PyrI chains organized as three dimers (R2).

The catalysed reaction is carbamoyl phosphate + L-aspartate = N-carbamoyl-L-aspartate + phosphate + H(+). Its pathway is pyrimidine metabolism; UMP biosynthesis via de novo pathway; (S)-dihydroorotate from bicarbonate: step 2/3. Functionally, catalyzes the condensation of carbamoyl phosphate and aspartate to form carbamoyl aspartate and inorganic phosphate, the committed step in the de novo pyrimidine nucleotide biosynthesis pathway. The chain is Aspartate carbamoyltransferase catalytic subunit from Nitrosomonas europaea (strain ATCC 19718 / CIP 103999 / KCTC 2705 / NBRC 14298).